A 72-amino-acid chain; its full sequence is Translation initiation factor IF-1 (72 aa).

In terms of domain architecture, S1-like spans 1–72; the sequence is MAKDDVIEVE…TRGRITYRYK (72 aa). Tyr60 bears the Phosphotyrosine mark.

Belongs to the IF-1 family. As to quaternary structure, component of the 30S ribosomal translation pre-initiation complex which assembles on the 30S ribosome in the order IF-2 and IF-3, IF-1 and N-formylmethionyl-tRNA(fMet); mRNA recruitment can occur at any time during PIC assembly.

The protein resides in the cytoplasm. Its function is as follows. One of the essential components for the initiation of protein synthesis. Stabilizes the binding of IF-2 and IF-3 on the 30S subunit to which N-formylmethionyl-tRNA(fMet) subsequently binds. Helps modulate mRNA selection, yielding the 30S pre-initiation complex (PIC). Upon addition of the 50S ribosomal subunit IF-1, IF-2 and IF-3 are released leaving the mature 70S translation initiation complex. This Geobacillus kaustophilus (strain HTA426) protein is Translation initiation factor IF-1.